The sequence spans 226 residues: UPF0758 protein LL1007 (226 aa).

The MPN domain occupies 103–225 (QVLSSREYGL…YFSFREEEIR (123 aa)). Zn(2+)-binding residues include H174, H176, and D187. The JAMM motif signature appears at 174-187 (HNHPSGNLKPSQAD).

The protein belongs to the UPF0758 family.

The protein is UPF0758 protein LL1007 of Lactococcus lactis subsp. lactis (strain IL1403) (Streptococcus lactis).